The following is a 365-amino-acid chain: MTQKLLLMAAGGTGGHMFPAQALAEAMLRKGWRVKLSTDPRGARYTGGFPHMTEITEVSSATFARGGLLAKAMVAPRIAAGVASMAMQMRRDRPDVVIGFGGYPSIPALGAATLLGLPRMIHEQNGVLGKVNQKFATRVAEVACGVWPTDLPAGAEGIHVGNPVRAAVLERQGAPYIPPGDYPMSLLVMGGSQGARILSDVVPGAIAALPETLRRHLRVSHQAREEDMARVAQFYADAGIDAEVQTFFADVPSRISEAQLVISRSGASSIADISVIGRPSILIPLATAAGDHQTANTRGLVEAGGAIRIPESALDTTSLAEQIAAVLTNAEGATQMAHAALSTGIPDATERLVARVEHLSEEAAP.

UDP-N-acetyl-alpha-D-glucosamine is bound by residues 13–15 (TGG), Asn-125, Arg-165, Ser-192, and Gln-293.

The protein belongs to the glycosyltransferase 28 family. MurG subfamily.

It is found in the cell inner membrane. The catalysed reaction is di-trans,octa-cis-undecaprenyl diphospho-N-acetyl-alpha-D-muramoyl-L-alanyl-D-glutamyl-meso-2,6-diaminopimeloyl-D-alanyl-D-alanine + UDP-N-acetyl-alpha-D-glucosamine = di-trans,octa-cis-undecaprenyl diphospho-[N-acetyl-alpha-D-glucosaminyl-(1-&gt;4)]-N-acetyl-alpha-D-muramoyl-L-alanyl-D-glutamyl-meso-2,6-diaminopimeloyl-D-alanyl-D-alanine + UDP + H(+). It functions in the pathway cell wall biogenesis; peptidoglycan biosynthesis. Cell wall formation. Catalyzes the transfer of a GlcNAc subunit on undecaprenyl-pyrophosphoryl-MurNAc-pentapeptide (lipid intermediate I) to form undecaprenyl-pyrophosphoryl-MurNAc-(pentapeptide)GlcNAc (lipid intermediate II). The protein is UDP-N-acetylglucosamine--N-acetylmuramyl-(pentapeptide) pyrophosphoryl-undecaprenol N-acetylglucosamine transferase of Ruegeria sp. (strain TM1040) (Silicibacter sp.).